A 322-amino-acid polypeptide reads, in one-letter code: 6-deoxy-6-sulfo-D-fructose transketolase subunit SqwH (322 aa).

This sequence belongs to the transketolase family. As to quaternary structure, forms a complex with SqwG. Requires thiamine diphosphate as cofactor.

The catalysed reaction is 6-deoxy-6-sulfo-D-fructose + D-glyceraldehyde 3-phosphate = 4-deoxy-4-sulfo-D-erythrose + D-xylulose 5-phosphate. The enzyme catalyses 4-deoxy-4-sulfo-D-erythrulose + D-glyceraldehyde 3-phosphate = sulfoacetaldehyde + D-xylulose 5-phosphate. Its function is as follows. Part of the sulfo-TK pathway, a D-sulfoquinovose degradation pathway that produces 2-hydroxyethane-1-sulfonate (isethionate). Catalyzes two steps of the pathway: the formation of 4-deoxy-4-sulfoerythrose (SE) and xylulose 5-phosphate from 6-deoxy-6-sulfo-D-fructose (SF) and glyceraldehyde 3-phosphate, and the formation of sulfoacetaldehyde (SA) and xylulose 5-phosphate from 4-deoxy-4-sulfo-D-erythrulose (SEu) and glyceraldehyde 3-phosphate. This is 6-deoxy-6-sulfo-D-fructose transketolase subunit SqwH from Clostridium sp. (strain MSTE9).